We begin with the raw amino-acid sequence, 292 residues long: MAEITAALVKELREKTDAPMMECKKALTEAEGDLARAEEILRVKLGNKASKAAARVTAEGLIGLYIAADGKQGAVIEVNCETDFVAKNTDFIDFINKLAELVATQNPADVAALSALPFGEGTVETTRTALVGKIGENISVRRFERIQTPNSLASYVHGGKIGVLVEFSGAEEVGKDLAMHIAATKPKALNADGVNAEDIAAERSVAEQKAAESGKPAEIVAKMVEGSVQKFLKEVTLLSQPFVKNDKQTIEQMLKEKGASITKFVLFVVGEGIEKKTADFASEVAAAAAGRA.

Positions 82 to 85 are involved in Mg(2+) ion dislocation from EF-Tu; sequence TDFV.

It belongs to the EF-Ts family.

Its subcellular location is the cytoplasm. Its function is as follows. Associates with the EF-Tu.GDP complex and induces the exchange of GDP to GTP. It remains bound to the aminoacyl-tRNA.EF-Tu.GTP complex up to the GTP hydrolysis stage on the ribosome. The polypeptide is Elongation factor Ts (Bordetella bronchiseptica (strain ATCC BAA-588 / NCTC 13252 / RB50) (Alcaligenes bronchisepticus)).